The chain runs to 255 residues: 5-oxoprolinase subunit A 2 (255 aa).

This sequence belongs to the LamB/PxpA family. Forms a complex composed of PxpA, PxpB and PxpC.

It catalyses the reaction 5-oxo-L-proline + ATP + 2 H2O = L-glutamate + ADP + phosphate + H(+). Functionally, catalyzes the cleavage of 5-oxoproline to form L-glutamate coupled to the hydrolysis of ATP to ADP and inorganic phosphate. The chain is 5-oxoprolinase subunit A 2 from Agrobacterium fabrum (strain C58 / ATCC 33970) (Agrobacterium tumefaciens (strain C58)).